A 182-amino-acid polypeptide reads, in one-letter code: Thioredoxin X, chloroplastic (182 aa).

Residues 1–67 constitute a chloroplast transit peptide; the sequence is MDSIVSSSTI…TRKSSSSVIR (67 aa). One can recognise a Thioredoxin domain in the interval 68-177; that stretch reads CGGIKEIGES…LKEYIDGLLN (110 aa). Active-site nucleophile residues include Cys-99 and Cys-102. Cys-99 and Cys-102 form a disulfide bridge.

This sequence belongs to the thioredoxin family. Predominantly expressed in leaves.

It is found in the plastid. The protein resides in the chloroplast stroma. Probable thiol-disulfide oxidoreductase that may participate in various redox reactions. The chain is Thioredoxin X, chloroplastic (ATHX) from Arabidopsis thaliana (Mouse-ear cress).